The following is a 360-amino-acid chain: Mannan endo-1,4-beta-mannosidase (360 aa).

A signal peptide spans 1–24 (MLKKLAVCLSIVLLLLGAASPISA). One can recognise a GH26 domain in the interval 36–347 (QTTKDIMNWL…YQNSWTLNKG (312 aa)). Residue His129 coordinates substrate. Catalysis depends on Glu191, which acts as the Proton donor. 2 residues coordinate substrate: Trp196 and Tyr266. Glu290 functions as the Nucleophile in the catalytic mechanism.

It belongs to the glycosyl hydrolase 26 family. In terms of assembly, homodimer.

The protein localises to the secreted. The catalysed reaction is Random hydrolysis of (1-&gt;4)-beta-D-mannosidic linkages in mannans, galactomannans and glucomannans.. In terms of biological role, involved in the degradation of glucomannan. Catalyzes the endo hydrolysis of beta-1,4-linked mannan, galactomannan and glucomannan. This Bacillus subtilis protein is Mannan endo-1,4-beta-mannosidase.